Reading from the N-terminus, the 312-residue chain is Aquaglyceroporin-2 (312 aa).

The next 6 membrane-spanning stretches (helical) occupy residues Phe78–Val98, Leu104–Ile124, Tyr151–Ala171, Gly203–Cys223, Val239–Ala259, and Tyr286–Tyr306.

It belongs to the MIP/aquaporin (TC 1.A.8) family.

Its subcellular location is the membrane. It catalyses the reaction glycerol(in) = glycerol(out). The catalysed reaction is H2O(in) = H2O(out). It carries out the reaction urea(in) = urea(out). In terms of biological role, mediates water and glycerol transport across cell membranes. Permeable to urea. Permeable to methylamine/methylammonium. Permeable to dihydroxyacetone. The polypeptide is Aquaglyceroporin-2 (Trypanosoma brucei brucei).